A 264-amino-acid polypeptide reads, in one-letter code: Thymidylate synthase (264 aa).

Residue R21 participates in dUMP binding. H51 contacts (6R)-5,10-methylene-5,6,7,8-tetrahydrofolate. Residue 126-127 (RR) coordinates dUMP. C146 (nucleophile) is an active-site residue. DUMP-binding positions include 166–169 (RSAD), N177, and 207–209 (HIY). D169 is a (6R)-5,10-methylene-5,6,7,8-tetrahydrofolate binding site. Position 263 (A263) interacts with (6R)-5,10-methylene-5,6,7,8-tetrahydrofolate.

The protein belongs to the thymidylate synthase family. Bacterial-type ThyA subfamily. In terms of assembly, homodimer.

It is found in the cytoplasm. The enzyme catalyses dUMP + (6R)-5,10-methylene-5,6,7,8-tetrahydrofolate = 7,8-dihydrofolate + dTMP. It participates in pyrimidine metabolism; dTTP biosynthesis. Its function is as follows. Catalyzes the reductive methylation of 2'-deoxyuridine-5'-monophosphate (dUMP) to 2'-deoxythymidine-5'-monophosphate (dTMP) while utilizing 5,10-methylenetetrahydrofolate (mTHF) as the methyl donor and reductant in the reaction, yielding dihydrofolate (DHF) as a by-product. This enzymatic reaction provides an intracellular de novo source of dTMP, an essential precursor for DNA biosynthesis. The chain is Thymidylate synthase from Brucella anthropi (strain ATCC 49188 / DSM 6882 / CCUG 24695 / JCM 21032 / LMG 3331 / NBRC 15819 / NCTC 12168 / Alc 37) (Ochrobactrum anthropi).